A 440-amino-acid polypeptide reads, in one-letter code: C-terminal-binding protein 1 (440 aa).

Residues 1-70 (MGSSHLLNKG…EIHEKVLNEA (70 aa)) are interaction with GLIS2 1. NAD(+)-binding positions include Ser-100, 180–185 (IGLGRV), Asp-204, 237–243 (CGLNEHN), 264–266 (TAR), and Asp-290. Arg-266 is a catalytic residue. Residues 288 to 360 (ALDVHESEPF…VNKDHLTAAT (73 aa)) form an interaction with GLIS2 2 region. The active site involves Glu-295. Ser-300 is subject to Phosphoserine. His-315 acts as the Proton donor in catalysis. NAD(+) is bound at residue 315–318 (HAAW). The disordered stretch occupies residues 408–440 (SHGLPPVAHPPHAPSPGQTVKPEADRDHASDQL). Ser-422 is modified (phosphoserine; by HIPK2). Residue Lys-428 forms a Glycyl lysine isopeptide (Lys-Gly) (interchain with G-Cter in SUMO) linkage. Basic and acidic residues predominate over residues 429-440 (PEADRDHASDQL).

The protein belongs to the D-isomer specific 2-hydroxyacid dehydrogenase family. Homo- or heterodimer. Heterodimer with CTBP2. Interacts with PRDM16; the interaction represses white adipose tissue (WAT)-specific genes expression. Interacts with GLIS2, FOXP2, HDAC4, HDAC5, HDAC9 and ZNF217. Interacts with ELK3 (via its PXDLS motif). Interacts with RBBP8 (via its PXDLS motif); the interaction is disrupted by binding to adenovirus E1A. Interacts with FOXP1, HIPK2, PNN, NRIP1, MECOM, ZFHX1B and WIZ. Interacts with ZNF366 (via PXDLS motif). Interaction with SATB1 (non-acetylated form); the interaction stabilizes its attachment to DNA and promotes transcription repression. Interacts with BCL6; the interaction is required for BCL6 transcriptional autoinhibition and inhibition of some BCL6 target genes. Interacts with IKZF4. Interacts with MCRIP1 (unphosphorylated form, via the PXDLS motif); competitively inhibiting CTBP-ZEB1 interaction. Interacts with Bassoon/BSN; this interaction targets and anchors CTBP1 to presynapses. Interacts with SIMC1. As to quaternary structure, (Microbial infection) Interacts with Epstein-Barr virus EBNA3. Interacts with Epstein-Barr virus EBNA6; this interaction leads to gene repression, but also seems to interfere with the repressive function of CtBP pre-bound to DNA, leading to EBNA6 mediated up-regulation of many cellular genes. In terms of assembly, (Microbial infection) Interacts with adenovirus E1A protein (via its C-terminus); the interaction disrupts the interaction of CTBP1 with RBBP8. (Microbial infection) Interacts with human adenovirus 5 E1A protein; this interaction seems to potentiate viral replication. Requires NAD(+) as cofactor. Post-translationally, the level of phosphorylation appears to be regulated during the cell cycle. Phosphorylation by HIPK2 on Ser-422 induces proteasomal degradation. In terms of processing, ADP-ribosylated; when cells are exposed to brefeldin A. Sumoylation on Lys-428 is promoted by the E3 SUMO-protein ligase CBX4. As to expression, expressed in germinal center B-cells.

Its subcellular location is the cytoplasm. It is found in the nucleus. Functionally, corepressor targeting diverse transcription regulators such as GLIS2 or BCL6. Has dehydrogenase activity. Involved in controlling the equilibrium between tubular and stacked structures in the Golgi complex. Functions in brown adipose tissue (BAT) differentiation. The sequence is that of C-terminal-binding protein 1 (CTBP1) from Homo sapiens (Human).